Reading from the N-terminus, the 72-residue chain is Gas vesicle protein A (72 aa).

It belongs to the gas vesicle GvpA family. As to quaternary structure, the gas vesicle shell is 2 nm thick and consists of a single layer of this protein. It forms helical ribs nearly perpendicular to the long axis of the vesicle.

The protein localises to the gas vesicle shell. Functionally, gas vesicles are hollow, gas filled proteinaceous nanostructures found in some microorganisms. During planktonic growth they allow positioning of the organism at a favorable depth for light or nutrient acquisition. GvpA forms the protein shell. This Planktothrix agardhii (Oscillatoria agardhii) protein is Gas vesicle protein A.